Reading from the N-terminus, the 257-residue chain is MAPITEEVVHGLKDMIEKLENRVQELEARLGGESKPKSIAEQMRIVLMGPPGAGKGTQAPRLKEKYCVCHLATGDMLRSQVAKKTELGKEAKKIMDQGGLVSDEIMVNMIKNELDTNSECKNGFILDGFPRTVAQAERLDDMLEARNQKLQHAIELQIDDALLVARITGRLVHPASGRSYHKIFNPPKNDMKDDVTGEPLIQRSDDNAETLKKRLSTYHAQTAPVVEYYKKTGIWRGIDASQEPGQVWKSLLGVFQK.

52–57 provides a ligand contact to ATP; sequence GAGKGT. Residues 72-101 are NMP; sequence ATGDMLRSQVAKKTELGKEAKKIMDQGGLV. AMP is bound by residues threonine 73, arginine 78, 99-101, 128-131, and glutamine 135; these read GLV and GFPR. Positions 169-206 are LID; it reads GRLVHPASGRSYHKIFNPPKNDMKDDVTGEPLIQRSDD. Residues arginine 170 and 179-180 each bind ATP; that span reads SY. Residues arginine 203 and arginine 214 each coordinate AMP. An ATP-binding site is contributed by glutamine 242.

Belongs to the adenylate kinase family. AK2 subfamily. Monomer.

It is found in the cytoplasm. It localises to the cytosol. The protein localises to the mitochondrion intermembrane space. It catalyses the reaction AMP + ATP = 2 ADP. Functionally, catalyzes the reversible transfer of the terminal phosphate group between ATP and AMP. Plays an important role in cellular energy homeostasis and in adenine nucleotide metabolism. Adenylate kinase activity is critical for regulation of the phosphate utilization and the AMP de novo biosynthesis pathways. The polypeptide is Adenylate kinase (adk1) (Aspergillus fumigatus (strain CBS 144.89 / FGSC A1163 / CEA10) (Neosartorya fumigata)).